The chain runs to 1212 residues: MEPRPTAPSSGAPGLAGVGETPSAAALAAARVELPGTAVPSVPEDAAPASRDGGGVRDEGPAAAGDGLGRPLGPTPSQSRFQVDLVSENAGRAAAAAAAAAAAAAAAGAGAGAKQTPADGEASGESEPAKGSEEAKGRFRVNFVDPAASSSAEDSLSDAAGVGVDGPNVSFQNGGDTVLSEGSSLHSGGGGGSGHHQHYYYDTHTNTYYLRTFGHNTMDAVPRIDHYRHTAAQLGEKLLRPSLAELHDELEKEPFEDGFANGEESTPTRDAVVTYTAESKGVVKFGWIKGVLVRCMLNIWGVMLFIRLSWIVGQAGIGLSVLVIMMATVVTTITGLSTSAIATNGFVRGGGAYYLISRSLGPEFGGAIGLIFAFANAVAVAMYVVGFAETVVELLKEHSILMIDEINDIRIIGAITVVILLGISVAGMEWEAKAQIVLLVILLLAIGDFVIGTFIPLESKKPKGFFGYKSEIFNENFGPDFREEETFFSVFAIFFPAATGILAGANISGDLADPQSAIPKGTLLAILITTLVYVGIAVSVGSCVVRDATGNVNDTIVTELTNCTSAACKLNFDFSSCESSPCSYGLMNNFQVMSMVSGFTPLISAGIFSATLSSALASLVSAPKIFQALCKDNIYPAFQMFAKGYGKNNEPLRGYILTFLIALGFILIAELNVIAPIISNFFLASYALINFSVFHASLAKSPGWRPAFKYYNMWISLLGAILCCIVMFVINWWAALLTYVIVLGLYIYVTYKKPDVNWGSSTQALTYLNALQHSIRLSGVEDHVKNFRPQCLVMTGAPNSRPALLHLVHDFTKNVGLMICGHVHMGPRRQAMKEMSIDQAKYQRWLIKNKMKAFYAPVHADDLREGAQYLMQAAGLGRMKPNTLVLGFKKDWLQADMRDVDMYINLFHDAFDIQYGVVVIRLKEGLDISHLQGQEELLSSQEKSPGTKDVVVSVEYSKKSDLDTSKPLSEKPITHKVEEEDGKTATQPLLKKESKGPIVPLNVADQKLLEASTQFQKKQGKNTIDVWWLFDDGGLTLLIPYLLTTKKKWKDCKIRVFIGGKINRIDHDRRAMATLLSKFRIDFSDIMVLGDINTKPKKENIIAFEEIIEPYRLHEDDKEQDIADKMKEDEPWRITDNELELYKTKTYRQIRLNELLKEHSSTANIIVMSLPVARKGAVSSALYMAWLEALSKDLPPILLVRGNHQSVLTFYS.

M1 carries the post-translational modification N-acetylmethionine. Over 1 to 286 the chain is Cytoplasmic; sequence MEPRPTAPSS…AESKGVVKFG (286 aa). Disordered stretches follow at residues 36-81, 112-138, and 150-193; these read GTAV…QSRF, GAKQ…AKGR, and SSAE…GGGS. Phosphoserine is present on residues S77 and S79. An RFXV motif 1 motif is present at residues 80–83; it reads RFQV. A compositionally biased stretch (basic and acidic residues) spans 127-137; that stretch reads EPAKGSEEAKG. Positions 138–141 match the RFXV motif 2 motif; that stretch reads RFRV. Residues 150–160 are compositionally biased toward low complexity; it reads SSAEDSLSDAA. 3 positions are modified to phosphothreonine; by OXSR1 and STK39: T203, T207, and T212. Phosphothreonine is present on residues T217 and T230. S242 carries the phosphoserine modification. T266 carries the phosphothreonine modification. A discontinuously helical transmembrane segment spans residues 287–316; it reads WIKGVLVRCMLNIWGVMLFIRLSWIVGQAG. Na(+) is bound at residue L297. Residues N298 and I299 each contribute to the K(+) site. W300 contacts Na(+). Positions 301, 302, and 303 each coordinate chloride. A helical membrane pass occupies residues 317-336; it reads IGLSVLVIMMATVVTTITGL. The Cytoplasmic segment spans residues 337-367; that stretch reads STSAIATNGFVRGGGAYYLISRSLGPEFGGA. The helical transmembrane segment at 368–395 threads the bilayer; that stretch reads IGLIFAFANAVAVAMYVVGFAETVVELL. Position 372 (F372) interacts with chloride. Y383 serves as a coordination point for K(+). Residues 396–405 are Extracellular-facing; the sequence is KEHSILMIDE. A helical membrane pass occupies residues 406-429; it reads INDIRIIGAITVVILLGISVAGME. The Cytoplasmic segment spans residues 430–432; sequence WEA. A helical membrane pass occupies residues 433 to 454; that stretch reads KAQIVLLVILLLAIGDFVIGTF. Topologically, residues 455 to 486 are extracellular; sequence IPLESKKPKGFFGYKSEIFNENFGPDFREEET. A discontinuously helical membrane pass occupies residues 487-504; the sequence is FFSVFAIFFPAATGILAG. The K(+) site is built by P496, A497, and T499. Chloride contacts are provided by P496 and A497. G500 and I501 together coordinate chloride. Topologically, residues 505–519 are cytoplasmic; sequence ANISGDLADPQSAIP. Residues 520–541 form a helical membrane-spanning segment; that stretch reads KGTLLAILITTLVYVGIAVSVG. The Extracellular segment spans residues 542–598; that stretch reads SCVVRDATGNVNDTIVTELTNCTSAACKLNFDFSSCESSPCSYGLMNNFQVMSMVSG. 2 N-linked (GlcNAc...) asparagine glycosylation sites follow: N553 and N562. 2 disulfides stabilise this stretch: C563–C568 and C577–C582. A helical transmembrane segment spans residues 599–623; the sequence is FTPLISAGIFSATLSSALASLVSAP. Na(+) is bound by residues A610, S613, and S614. Over 624 to 651 the chain is Cytoplasmic; sequence KIFQALCKDNIYPAFQMFAKGYGKNNEP. 2 helical membrane-spanning segments follow: residues 652-672 and 673-691; these read LRGY…AELN and VIAP…LINF. Chloride contacts are provided by F682 and Y686. The Cytoplasmic portion of the chain corresponds to 692 to 714; that stretch reads SVFHASLAKSPGWRPAFKYYNMW. The next 2 helical transmembrane spans lie at 715–732 and 733–745; these read ISLL…VINW and WAAL…VLGL. Residues 746–1212 lie on the Cytoplasmic side of the membrane; sequence YIYVTYKKPD…NHQSVLTFYS (467 aa). Residues 761–778 are scissor helix; sequence STQALTYLNALQHSIRLS. S940 and S944 each carry phosphoserine. Residues 962–978 are compositionally biased toward basic and acidic residues; the sequence is LDTSKPLSEKPITHKVE. The segment at 962–989 is disordered; sequence LDTSKPLSEKPITHKVEEEDGKTATQPL. S994 carries the post-translational modification Phosphoserine.

It belongs to the SLC12A transporter family. In terms of assembly, homodimer; adopts a domain-swap conformation at the scissor helices connecting the transmembrane domain and C-terminal domain. In terms of processing, phosphorylated at Thr-203, Thr-207 and Thr-212 by OXSR1/OSR1 and STK39/SPAK downstream of WNK kinases (WNK1, WNK2, WNK3 or WNK4), promoting its activity. As to expression, expressed in many tissues.

The protein localises to the basolateral cell membrane. It carries out the reaction K(+)(out) + 2 chloride(out) + Na(+)(out) = K(+)(in) + 2 chloride(in) + Na(+)(in). Activated following phosphorylation by OXSR1/OSR1 and STK39/SPAK downstream of WNK kinases (WNK1, WNK2, WNK3 or WNK4). Inhibited by bumetanide. Inhibited by furosemide. In terms of biological role, cation-chloride cotransporter which mediates the electroneutral transport of chloride, potassium and/or sodium ions across the membrane. Plays a vital role in the regulation of ionic balance and cell volume. The protein is Solute carrier family 12 member 2 (SLC12A2) of Homo sapiens (Human).